The sequence spans 102 residues: Co-chaperonin GroES (102 aa).

The protein belongs to the GroES chaperonin family. As to quaternary structure, heptamer of 7 subunits arranged in a ring. Interacts with the chaperonin GroEL.

Its subcellular location is the cytoplasm. Together with the chaperonin GroEL, plays an essential role in assisting protein folding. The GroEL-GroES system forms a nano-cage that allows encapsulation of the non-native substrate proteins and provides a physical environment optimized to promote and accelerate protein folding. GroES binds to the apical surface of the GroEL ring, thereby capping the opening of the GroEL channel. The polypeptide is Co-chaperonin GroES (Streptomyces albus G).